The sequence spans 129 residues: Small ribosomal subunit protein uS11 (129 aa).

Belongs to the universal ribosomal protein uS11 family. In terms of assembly, part of the 30S ribosomal subunit. Interacts with proteins S7 and S18. Binds to IF-3.

Located on the platform of the 30S subunit, it bridges several disparate RNA helices of the 16S rRNA. Forms part of the Shine-Dalgarno cleft in the 70S ribosome. This is Small ribosomal subunit protein uS11 from Aeromonas hydrophila subsp. hydrophila (strain ATCC 7966 / DSM 30187 / BCRC 13018 / CCUG 14551 / JCM 1027 / KCTC 2358 / NCIMB 9240 / NCTC 8049).